A 565-amino-acid polypeptide reads, in one-letter code: E3 ubiquitin-protein ligase RNF168 (565 aa).

Residues 16 to 55 (CGICMEILLEPVTLPCNHTLCNPCFQSTVEKANLCCPFCR) form an RING-type zinc finger. Ser70 bears the Phosphoserine mark. The short motif at 110-128 (LSEPGELRREYEEEISRVE) is the LR motif 1 element. Ser134 bears the Phosphoserine mark. A UMI motif motif is present at residues 143–151 (EEYIQRLLA). 2 disordered regions span residues 150 to 223 (LAEE…KTFG) and 252 to 302 (SKET…PQLC). Residues 157 to 179 (EKRQREKRRSEMEEQLRGDEELA) are compositionally biased toward basic and acidic residues. Positions 168-191 (MEEQLRGDEELARSLSTSINSNYE) match the MIU motif 1 motif. Residues 181-201 (SLSTSINSNYERNTLASPLSS) show a composition bias toward polar residues. Position 197 is a phosphoserine (Ser197). Lys210 is covalently cross-linked (Glycyl lysine isopeptide (Lys-Gly) (interchain with G-Cter in SUMO2)). The span at 275 to 293 (PTLSPQTCLETQEQGSESS) shows a compositional bias: polar residues. Ser413 and Ser414 each carry phosphoserine. Residues 438–461 (RHKQEEQDRLLALQLQKEVDKEQM) carry the MIU motif 2 motif. A disordered region spans residues 458 to 521 (KEQMVPNRQK…TKGDYWEPFK (64 aa)). The LR motif 2 motif lies at 465-476 (RQKGSPDQYQLR). A compositionally biased stretch (polar residues) spans 466–477 (QKGSPDQYQLRT). Residue Ser469 is modified to Phosphoserine. Residues 504–518 (DHSKSPRNTKGDYWE) are compositionally biased toward basic and acidic residues. Lys525 is covalently cross-linked (Glycyl lysine isopeptide (Lys-Gly) (interchain with G-Cter in SUMO2)).

This sequence belongs to the RNF168 family. As to quaternary structure, monomer. Interacts with UBE2N/UBC13. Sumoylated with SUMO1 by PIAS4 in response to double-strand breaks (DSBs). Post-translationally, ubiquitinated.

It localises to the nucleus. The catalysed reaction is S-ubiquitinyl-[E2 ubiquitin-conjugating enzyme]-L-cysteine + [acceptor protein]-L-lysine = [E2 ubiquitin-conjugating enzyme]-L-cysteine + N(6)-ubiquitinyl-[acceptor protein]-L-lysine.. It participates in protein modification; protein ubiquitination. E3 ubiquitin-protein ligase required for accumulation of repair proteins to sites of DNA damage. Acts with UBE2N/UBC13 to amplify the RNF8-dependent histone ubiquitination. Recruited to sites of DNA damage at double-strand breaks (DSBs) by binding to ubiquitinated histone H2A and H2AX and amplifies the RNF8-dependent H2A ubiquitination, promoting the formation of 'Lys-63'-linked ubiquitin conjugates. This leads to concentrate ubiquitinated histones H2A and H2AX at DNA lesions to the threshold required for recruitment of TP53BP1 and BRCA1. Also recruited at DNA interstrand cross-links (ICLs) sites and promotes accumulation of 'Lys-63'-linked ubiquitination of histones H2A and H2AX, leading to recruitment of FAAP20 and Fanconi anemia (FA) complex, followed by interstrand cross-link repair. H2A ubiquitination also mediates the ATM-dependent transcriptional silencing at regions flanking DSBs in cis, a mechanism to avoid collision between transcription and repair intermediates. Also involved in class switch recombination in immune system, via its role in regulation of DSBs repair. Following DNA damage, promotes the ubiquitination and degradation of JMJD2A/KDM4A in collaboration with RNF8, leading to unmask H4K20me2 mark and promote the recruitment of TP53BP1 at DNA damage sites. Not able to initiate 'Lys-63'-linked ubiquitination in vitro; possibly due to partial occlusion of the UBE2N/UBC13-binding region. Catalyzes monoubiquitination of 'Lys-13' and 'Lys-15' of nucleosomal histone H2A (H2AK13Ub and H2AK15Ub, respectively). The protein is E3 ubiquitin-protein ligase RNF168 of Mus musculus (Mouse).